Here is a 459-residue protein sequence, read N- to C-terminus: ATP synthase subunit beta (459 aa).

An ATP-binding site is contributed by 147–154; that stretch reads GGAGVGKT.

The protein belongs to the ATPase alpha/beta chains family. As to quaternary structure, F-type ATPases have 2 components, CF(1) - the catalytic core - and CF(0) - the membrane proton channel. CF(1) has five subunits: alpha(3), beta(3), gamma(1), delta(1), epsilon(1). CF(0) has three main subunits: a(1), b(2) and c(9-12). The alpha and beta chains form an alternating ring which encloses part of the gamma chain. CF(1) is attached to CF(0) by a central stalk formed by the gamma and epsilon chains, while a peripheral stalk is formed by the delta and b chains.

The protein resides in the cell inner membrane. It catalyses the reaction ATP + H2O + 4 H(+)(in) = ADP + phosphate + 5 H(+)(out). Its function is as follows. Produces ATP from ADP in the presence of a proton gradient across the membrane. The catalytic sites are hosted primarily by the beta subunits. In Hydrogenovibrio crunogenus (strain DSM 25203 / XCL-2) (Thiomicrospira crunogena), this protein is ATP synthase subunit beta.